The following is a 38-amino-acid chain: uncharacterized protein (38 aa).

This is an uncharacterized protein from Treponema pallidum (strain Nichols).